We begin with the raw amino-acid sequence, 231 residues long: Lipoprotein-releasing system ATP-binding protein LolD 2 (231 aa).

The region spanning 6-230 (VEARSLSKSF…DGRLVGQDPA (225 aa)) is the ABC transporter domain. Position 42-49 (42-49 (GPSGSGKS)) interacts with ATP.

Belongs to the ABC transporter superfamily. Lipoprotein translocase (TC 3.A.1.125) family. The complex is composed of two ATP-binding proteins (LolD) and two transmembrane proteins (LolC and LolE).

The protein resides in the cell inner membrane. Functionally, part of the ABC transporter complex LolCDE involved in the translocation of mature outer membrane-directed lipoproteins, from the inner membrane to the periplasmic chaperone, LolA. Responsible for the formation of the LolA-lipoprotein complex in an ATP-dependent manner. The polypeptide is Lipoprotein-releasing system ATP-binding protein LolD 2 (Rhodospirillum rubrum (strain ATCC 11170 / ATH 1.1.1 / DSM 467 / LMG 4362 / NCIMB 8255 / S1)).